The chain runs to 477 residues: Ribulose bisphosphate carboxylase large chain (477 aa).

Residues 1 to 2 (MS) constitute a propeptide that is removed on maturation. P3 is subject to N-acetylproline. The residue at position 14 (K14) is an N6,N6,N6-trimethyllysine. Residues N123 and T173 each coordinate substrate. The active-site Proton acceptor is K175. K177 lines the substrate pocket. Residues K201, D203, and E204 each contribute to the Mg(2+) site. The residue at position 201 (K201) is an N6-carboxylysine. H294 acts as the Proton acceptor in catalysis. Substrate contacts are provided by R295, H327, and S379.

This sequence belongs to the RuBisCO large chain family. Type I subfamily. In terms of assembly, heterohexadecamer of 8 large chains and 8 small chains; disulfide-linked. The disulfide link is formed within the large subunit homodimers. Requires Mg(2+) as cofactor. Post-translationally, the disulfide bond which can form in the large chain dimeric partners within the hexadecamer appears to be associated with oxidative stress and protein turnover.

The protein localises to the plastid. The protein resides in the chloroplast. The catalysed reaction is 2 (2R)-3-phosphoglycerate + 2 H(+) = D-ribulose 1,5-bisphosphate + CO2 + H2O. It carries out the reaction D-ribulose 1,5-bisphosphate + O2 = 2-phosphoglycolate + (2R)-3-phosphoglycerate + 2 H(+). Its function is as follows. RuBisCO catalyzes two reactions: the carboxylation of D-ribulose 1,5-bisphosphate, the primary event in carbon dioxide fixation, as well as the oxidative fragmentation of the pentose substrate in the photorespiration process. Both reactions occur simultaneously and in competition at the same active site. This chain is Ribulose bisphosphate carboxylase large chain, found in Nicotiana otophora (Tobacco).